Here is a 111-residue protein sequence, read N- to C-terminus: MAKIQFSRGLDEEVIPEVRLTRSRTGDTGTATFIFTNPKILDQGTTEDITGMYLIDEEGEIITREVKGKFINGRPEGLEAVYVMKSAQEWERFIRFMERYAQENDLGFSKS.

Belongs to the Psb28 family. In terms of assembly, part of the photosystem II complex.

Its subcellular location is the cellular thylakoid membrane. This chain is Photosystem II reaction center Psb28 protein, found in Nostoc sp. (strain PCC 7120 / SAG 25.82 / UTEX 2576).